The chain runs to 366 residues: Transcription factor IIIA (366 aa).

9 consecutive C2H2-type zinc fingers follow at residues 35–59 (YICS…LCKH), 65–89 (FPCK…SLTH), 95–120 (FTCD…NRFH), 127–151 (YVCH…QFSH), 157–181 (YECP…EKVH), 184–210 (YPCK…AECH), 214–236 (AVCD…QKTH), 243–268 (YLCP…QSFH), and 274–298 (FVCE…SVVH). Phosphoserine; by CK2 is present on serine 38. Residues 299 to 310 (DPEKRKLKEKCP) show a composition bias toward basic and acidic residues. Positions 299–366 (DPEKRKLKEK…SLVLDKLTIQ (68 aa)) are disordered. Serine 336 bears the Phosphoserine; by CK2; in vitro mark.

Post-translationally, the N-terminus is blocked. Synthesized in oocytes and, in much lower levels, in somatic cells.

The protein resides in the nucleus. Functionally, involved in ribosomal large subunit biogenesis. Acts both as a positive transcription factor for 5S RNA genes, and as a specific RNA binding protein that complexes with 5S RNA in oocytes to form the 7S ribonucleoprotein storage particle. May play an essential role in the developmental change in 5S RNA gene expression. Interacts with the internal control region (ICR) of approximately 50 bases within the 5S RNA genes, is required for correct transcription of these genes by RNA polymerase III. Also binds the transcribed 5S RNA's. In Xenopus laevis (African clawed frog), this protein is Transcription factor IIIA (gtf3a).